A 145-amino-acid polypeptide reads, in one-letter code: 3-hydroxyacyl-[acyl-carrier-protein] dehydratase FabZ (145 aa).

His-48 is an active-site residue.

It belongs to the thioester dehydratase family. FabZ subfamily.

It localises to the cytoplasm. The catalysed reaction is a (3R)-hydroxyacyl-[ACP] = a (2E)-enoyl-[ACP] + H2O. Involved in unsaturated fatty acids biosynthesis. Catalyzes the dehydration of short chain beta-hydroxyacyl-ACPs and long chain saturated and unsaturated beta-hydroxyacyl-ACPs. The chain is 3-hydroxyacyl-[acyl-carrier-protein] dehydratase FabZ from Marinobacter nauticus (strain ATCC 700491 / DSM 11845 / VT8) (Marinobacter aquaeolei).